The primary structure comprises 124 residues: Seripauperin-15 (124 aa).

A signal peptide spans M1–A20.

Belongs to the SRP1/TIP1 family. Seripauperin subfamily.

This chain is Seripauperin-15 (PAU15), found in Saccharomyces cerevisiae (strain ATCC 204508 / S288c) (Baker's yeast).